Here is a 474-residue protein sequence, read N- to C-terminus: Putative response regulator NtrX-like (474 aa).

One can recognise a Response regulatory domain in the interval 5–121 (DVLIVDDEES…KLVILLTRAC (117 aa)). Asp54 carries the post-translational modification 4-aspartylphosphate. The 226-residue stretch at 143-368 (LVGECSVTLK…LRNVVEWTLI (226 aa)) folds into the Sigma-54 factor interaction domain. ATP-binding positions include 171–178 (GKVGSGKE) and 231–240 (ANNGTLYIDE).

Functionally, member of the two-component regulatory system RC0849/RC0948. The chain is Putative response regulator NtrX-like from Rickettsia conorii (strain ATCC VR-613 / Malish 7).